The following is a 427-amino-acid chain: Trigger factor (427 aa).

Residues 163–248 enclose the PPIase FKBP-type domain; sequence GDTVVIDFVG…VNEVKAKEVP (86 aa).

This sequence belongs to the FKBP-type PPIase family. Tig subfamily.

It localises to the cytoplasm. It catalyses the reaction [protein]-peptidylproline (omega=180) = [protein]-peptidylproline (omega=0). In terms of biological role, involved in protein export. Acts as a chaperone by maintaining the newly synthesized protein in an open conformation. Functions as a peptidyl-prolyl cis-trans isomerase. The protein is Trigger factor of Streptococcus thermophilus (strain CNRZ 1066).